The primary structure comprises 1649 residues: Cortactin-binding protein 2 (1649 aa).

A disordered region spans residues 1 to 23; sequence MATDGASCEPDLSRAPEDAAGAA. The stretch at 119–276 forms a coiled coil; the sequence is RKMQERMSAQ…EQLKRGSDSK (158 aa). Disordered regions lie at residues 366-440 and 454-478; these read IGVS…LHPG and GNAN…SPTS. Composition is skewed to low complexity over residues 368 to 379 and 386 to 396; these read VSVPAFPPSSAS and PSTGSTPDPTS. A compositionally biased stretch (polar residues) spans 411-422; it reads QTPGITPQNSQA. Arg-498 carries the asymmetric dimethylarginine modification. The interval 499 to 616 is disordered; it reads FTGPQAGAPP…SSPQLPPKPS (118 aa). Residues 583–593 are compositionally biased toward polar residues; it reads TVASPPSSLPQ. ANK repeat units follow at residues 709 to 739, 743 to 772, 776 to 805, 809 to 838, and 842 to 871; these read GRPT…DINY, DGHS…QVNA, NGFT…NINH, GGQT…DRSV, and DGWT…PAHG. The disordered stretch occupies residues 872–897; that stretch reads NSFSEEESESGVFDLDGGEESPEGKS. Residues 912-942 form an ANK 6 repeat; that stretch reads EGWTAAHIAASKGFKNCLEILCRHGGLETER. The tract at residues 1444–1482 is disordered; the sequence is SCSKKKGESGAWRRVNTSPRRKSSRFSLPTWNKPDLSNE. Ser-1524 is modified (phosphoserine). Residues 1616–1649 form a disordered region; sequence PRSKVTQCSQNTKRSSSSSNTRQIEINNNSKEEN. Residues 1624–1638 show a composition bias toward low complexity; it reads SQNTKRSSSSSNTRQ. A compositionally biased stretch (polar residues) spans 1639 to 1649; sequence IEINNNSKEEN.

As to quaternary structure, interacts with CTTN/cortactin SH3 domain. Interacts with STRN, STRN4/zinedin and MOB4/phocein; this interactions mediate the association with the STRIPAK core complex and may regulate dendritic spine distribution of the STRIPAK complex in hippocampal neurons. Activation of glutamate receptors weakens the interaction with STRN and STRN4.

It is found in the cytoplasm. It localises to the cell cortex. Its subcellular location is the cell projection. The protein localises to the dendritic spine. Functionally, regulates the dendritic spine distribution of CTTN/cortactin in hippocampal neurons, and thus controls dendritic spinogenesis and dendritic spine maintenance. Associates with the striatin-interacting phosphatase and kinase (STRIPAK) core complex to regulate dendritic spine distribution of the STRIPAK complex in hippocampal neurons. In Aotus nancymaae (Ma's night monkey), this protein is Cortactin-binding protein 2 (CTTNBP2).